The chain runs to 198 residues: ATP-dependent Clp protease proteolytic subunit (198 aa).

The active-site Nucleophile is serine 98. Residue histidine 123 is part of the active site.

The protein belongs to the peptidase S14 family. Fourteen ClpP subunits assemble into 2 heptameric rings which stack back to back to give a disk-like structure with a central cavity, resembling the structure of eukaryotic proteasomes.

It is found in the cytoplasm. The catalysed reaction is Hydrolysis of proteins to small peptides in the presence of ATP and magnesium. alpha-casein is the usual test substrate. In the absence of ATP, only oligopeptides shorter than five residues are hydrolyzed (such as succinyl-Leu-Tyr-|-NHMec, and Leu-Tyr-Leu-|-Tyr-Trp, in which cleavage of the -Tyr-|-Leu- and -Tyr-|-Trp bonds also occurs).. Cleaves peptides in various proteins in a process that requires ATP hydrolysis. Has a chymotrypsin-like activity. Plays a major role in the degradation of misfolded proteins. This Ehrlichia ruminantium (strain Welgevonden) protein is ATP-dependent Clp protease proteolytic subunit.